The following is a 242-amino-acid chain: Probable septum site-determining protein MinC (242 aa).

The protein belongs to the MinC family. As to quaternary structure, interacts with MinD and FtsZ.

Cell division inhibitor that blocks the formation of polar Z ring septums. Rapidly oscillates between the poles of the cell to destabilize FtsZ filaments that have formed before they mature into polar Z rings. Prevents FtsZ polymerization. The chain is Probable septum site-determining protein MinC from Buchnera aphidicola subsp. Schizaphis graminum (strain Sg).